A 361-amino-acid chain; its full sequence is tRNA-specific 2-thiouridylase MnmA (361 aa).

Residues 11-18 (GMSGGVDS) and methionine 37 contribute to the ATP site. Cysteine 106 (nucleophile) is an active-site residue. Residues cysteine 106 and cysteine 202 are joined by a disulfide bond. Glycine 130 serves as a coordination point for ATP. Residues 152 to 154 (KDQ) form an interaction with tRNA region. Cysteine 202 acts as the Cysteine persulfide intermediate in catalysis. The segment at 308–309 (RY) is interaction with tRNA.

This sequence belongs to the MnmA/TRMU family.

The protein resides in the cytoplasm. It catalyses the reaction S-sulfanyl-L-cysteinyl-[protein] + uridine(34) in tRNA + AH2 + ATP = 2-thiouridine(34) in tRNA + L-cysteinyl-[protein] + A + AMP + diphosphate + H(+). Its function is as follows. Catalyzes the 2-thiolation of uridine at the wobble position (U34) of tRNA, leading to the formation of s(2)U34. This is tRNA-specific 2-thiouridylase MnmA from Clostridium botulinum (strain Eklund 17B / Type B).